The following is a 64-amino-acid chain: Large ribosomal subunit protein bL35 (64 aa).

This sequence belongs to the bacterial ribosomal protein bL35 family.

The polypeptide is Large ribosomal subunit protein bL35 (Desulforudis audaxviator (strain MP104C)).